The following is a 493-amino-acid chain: Dipeptide and tripeptide permease B (493 aa).

Topologically, residues 1–27 (MERSTPTGLLQQPKPFFMIFFVELWER) are cytoplasmic. Residues 28-48 (FGYYGVQGILAVFFVQQLGFS) form a helical membrane-spanning segment. Over 49–52 (QEQA) the chain is Periplasmic. Residues 53 to 73 (FVTFGAFAALVYGLISIGGYV) traverse the membrane as a helical segment. Topologically, residues 74–82 (GDHLLGTKR) are cytoplasmic. Residues 83–103 (TMVLGAVVLAAGYFATGLSLY) traverse the membrane as a helical segment. The Periplasmic segment spans residues 104–106 (QPN). The chain crosses the membrane as a helical span at residues 107–127 (LIFFALGTIAVGNGLFKANPA). The Cytoplasmic segment spans residues 128-146 (SLLSKCYPPKDPRLDGAFT). Residues 147-167 (LFYMSINIGSLLSLSLAPVIA) traverse the membrane as a helical segment. Topologically, residues 168–169 (ER) are periplasmic. Residues 170–190 (FGYTVTYYLCGIGLIFALLVY) form a helical membrane-spanning segment. The Cytoplasmic segment spans residues 191–212 (FCCRHMVRHIGSEPDTKPLNWR). The next 2 membrane-spanning stretches (helical) occupy residues 213–233 (NLLL…WLMN) and 234–254 (HVFI…FIFF). Over 255–267 (REASKQDRLGRNK) the chain is Cytoplasmic. A helical transmembrane segment spans residues 268–288 (MFVAFILMIEAIVFYVLYAQM). Over 289–311 (PTSLNFFAINNVHHEILGFSINP) the chain is Periplasmic. The helical transmembrane segment at 312–332 (VSFQALNPFWVVVASPILASI) threads the bilayer. Topologically, residues 333–350 (YTRLGSQNRDLSMPAKFT) are cytoplasmic. The chain crosses the membrane as a helical span at residues 351–371 (LGMFLCSLGFLTAAAAGMWFA). Topologically, residues 372–379 (DAQGLTSP) are periplasmic. The helical transmembrane segment at 380–400 (WFIVLVYLFQSLGELMISALG) threads the bilayer. The Cytoplasmic segment spans residues 401–424 (LAMVAALVPQYLMGFILGMWFLTQ). A helical transmembrane segment spans residues 425–445 (AASFLIGGYVATFTATPEGMT). Residues 446-456 (DPLETLPIYTD) lie on the Periplasmic side of the membrane. Residues 457–477 (VFGKIGMVTLVIALVMALLIP) form a helical membrane-spanning segment. The Cytoplasmic portion of the chain corresponds to 478–493 (WLNRMINSSAAEDAVA).

Belongs to the major facilitator superfamily. Proton-dependent oligopeptide transporter (POT/PTR) (TC 2.A.17) family. DtpB subfamily.

Its subcellular location is the cell inner membrane. Proton-dependent permease that transports di- and tripeptides. The sequence is that of Dipeptide and tripeptide permease B from Yersinia enterocolitica serotype O:8 / biotype 1B (strain NCTC 13174 / 8081).